A 230-amino-acid chain; its full sequence is UPF0173 metal-dependent hydrolase Rsph17029_0942 (230 aa).

It belongs to the UPF0173 family.

This chain is UPF0173 metal-dependent hydrolase Rsph17029_0942, found in Cereibacter sphaeroides (strain ATCC 17029 / ATH 2.4.9) (Rhodobacter sphaeroides).